Reading from the N-terminus, the 225-residue chain is Cobalt transport protein CbiM (225 aa).

6 helical membrane passes run 7 to 27 (VLPLGWCAFWNALALPFVAIA), 43 to 63 (PFVGLIAAAVFAISCMPVPVP), 76 to 96 (LAAVLIGPWMTVLVTVVALLI), 108 to 128 (TLGADVASMGIAGAFTGYFAF), 143 to 163 (FLAGVTSDWATYATTALALAL), and 175 to 195 (FTGVALAFVPTQLPLGLLEGV).

It belongs to the CbiM family. In terms of assembly, forms an energy-coupling factor (ECF) transporter complex composed of an ATP-binding protein (A component, CbiO), a transmembrane protein (T component, CbiQ) and 2 possible substrate-capture proteins (S components, CbiM and CbiN) of unknown stoichimetry.

The protein resides in the cell inner membrane. It functions in the pathway cofactor biosynthesis; adenosylcobalamin biosynthesis. Its function is as follows. Part of the energy-coupling factor (ECF) transporter complex CbiMNOQ involved in cobalt import. In Sorangium cellulosum (strain So ce56) (Polyangium cellulosum (strain So ce56)), this protein is Cobalt transport protein CbiM.